We begin with the raw amino-acid sequence, 290 residues long: ATP synthase gamma chain (290 aa).

It belongs to the ATPase gamma chain family. F-type ATPases have 2 components, CF(1) - the catalytic core - and CF(0) - the membrane proton channel. CF(1) has five subunits: alpha(3), beta(3), gamma(1), delta(1), epsilon(1). CF(0) has three main subunits: a, b and c.

It is found in the cell inner membrane. Produces ATP from ADP in the presence of a proton gradient across the membrane. The gamma chain is believed to be important in regulating ATPase activity and the flow of protons through the CF(0) complex. The polypeptide is ATP synthase gamma chain (Anaeromyxobacter dehalogenans (strain 2CP-1 / ATCC BAA-258)).